The following is a 127-amino-acid chain: Aspartate 1-decarboxylase (127 aa).

S25 functions as the Schiff-base intermediate with substrate; via pyruvic acid in the catalytic mechanism. S25 bears the Pyruvic acid (Ser) mark. T57 is a substrate binding site. The Proton donor role is filled by Y58. 73–75 (GAA) contacts substrate.

This sequence belongs to the PanD family. Heterooctamer of four alpha and four beta subunits. Requires pyruvate as cofactor. Is synthesized initially as an inactive proenzyme, which is activated by self-cleavage at a specific serine bond to produce a beta-subunit with a hydroxyl group at its C-terminus and an alpha-subunit with a pyruvoyl group at its N-terminus.

It localises to the cytoplasm. It carries out the reaction L-aspartate + H(+) = beta-alanine + CO2. It participates in cofactor biosynthesis; (R)-pantothenate biosynthesis; beta-alanine from L-aspartate: step 1/1. Functionally, catalyzes the pyruvoyl-dependent decarboxylation of aspartate to produce beta-alanine. The chain is Aspartate 1-decarboxylase from Clostridium acetobutylicum (strain ATCC 824 / DSM 792 / JCM 1419 / IAM 19013 / LMG 5710 / NBRC 13948 / NRRL B-527 / VKM B-1787 / 2291 / W).